A 344-amino-acid chain; its full sequence is Rho guanine nucleotide exchange factor 39 (344 aa).

One can recognise a DH domain in the interval 22–197 (KRVCTARELL…SETAQKVHAI (176 aa)). Residues 227-331 (WFLRQGWLLV…WHHSLTLAIR (105 aa)) form the PH domain.

The protein localises to the cell membrane. Promotes cell proliferation. The sequence is that of Rho guanine nucleotide exchange factor 39 (Arhgef39) from Mus musculus (Mouse).